The chain runs to 533 residues: Laccase-2 (533 aa).

The first 23 residues, 1 to 23 (MFPGARILATLTLALHLLHGAHA), serve as a signal peptide directing secretion. Plastocyanin-like domains are found at residues 25 to 171 (IGPA…LSLY), 173 to 336 (IDNA…LETN), and 382 to 501 (TAPV…FAED). His98, His100, His143, and His145 together coordinate Cu cation. Disulfide bonds link Cys119/Cys516 and Cys151/Cys238. 3 residues coordinate Cu cation: His427, His430, and His432. Asn467 carries N-linked (GlcNAc...) (high mannose) asparagine glycosylation. Positions 483, 484, 485, and 489 each coordinate Cu cation.

This sequence belongs to the multicopper oxidase family. It depends on Cu cation as a cofactor. Post-translationally, N-glycosylated at Asn-467; contains a high-mannose glycan with a varying number of mannose residues.

The protein resides in the secreted. The catalysed reaction is 4 hydroquinone + O2 = 4 benzosemiquinone + 2 H2O. Lignin degradation and detoxification of lignin-derived products. This Pleurotus ostreatus (Oyster mushroom) protein is Laccase-2 (POX2).